The primary structure comprises 488 residues: MSLNHKTIDELHTLLLSKEISAKELTQATLDDIKAREDAVGSFITLAEEKALSQAEAIDARGIDPNNVMSGIPFAVKDNISTEGILTTAASKMLYNYEPIFNATAIEKAYAKDMIVIGKTNMDEFAMGGSTETSYFKKTKNAWDHSKVPGGSSGGSATAVASGQVRLSLGSDTGGSIRQPAAFNGIVGMKPTYGTVSRFGLIAFGSSLDQIGPFSQTVKENAQLLNVIAGSDDKDSTSAPVQIADYTSAIGKDIKGMKIALPKEYLGEGIDPKIKENILEAAKQFEKLGATVEEVSLPHSKYGVAVYYIIASSEASSNLQRFDGIRYGYRAQDAKTLEEIYVNTRSQGFGEEVKRRIMLGTFSLSSGYYDAYFKKAGQVRTLIIQDFEKVFADYDLIIGPTAPTVAFGLDTLNHDPVSMYLADLLTIPVNLAGLPGISIPSGFVDGLPVGLQLIGPKYSEERIYQAAAAFEATTDYHKQQPVIFGGEK.

Catalysis depends on charge relay system residues Lys77 and Ser152. Ser176 functions as the Acyl-ester intermediate in the catalytic mechanism.

The protein belongs to the amidase family. GatA subfamily. In terms of assembly, heterotrimer of A, B and C subunits.

It catalyses the reaction L-glutamyl-tRNA(Gln) + L-glutamine + ATP + H2O = L-glutaminyl-tRNA(Gln) + L-glutamate + ADP + phosphate + H(+). Allows the formation of correctly charged Gln-tRNA(Gln) through the transamidation of misacylated Glu-tRNA(Gln) in organisms which lack glutaminyl-tRNA synthetase. The reaction takes place in the presence of glutamine and ATP through an activated gamma-phospho-Glu-tRNA(Gln). This is Glutamyl-tRNA(Gln) amidotransferase subunit A from Streptococcus uberis (strain ATCC BAA-854 / 0140J).